Here is a 116-residue protein sequence, read N- to C-terminus: Small ribosomal subunit protein uS8c (116 aa).

This sequence belongs to the universal ribosomal protein uS8 family. In terms of assembly, part of the 30S ribosomal subunit.

It localises to the plastid. It is found in the chloroplast. One of the primary rRNA binding proteins, it binds directly to 16S rRNA central domain where it helps coordinate assembly of the platform of the 30S subunit. The chain is Small ribosomal subunit protein uS8c (rps8) from Musa acuminata (Banana).